Here is a 34-residue protein sequence, read N- to C-terminus: Photosystem II reaction center protein M (34 aa).

The helical transmembrane segment at 5 to 25 (ILAVIATALFVLIPTAFLLIL) threads the bilayer.

The protein belongs to the PsbM family. In terms of assembly, PSII is composed of 1 copy each of membrane proteins PsbA, PsbB, PsbC, PsbD, PsbE, PsbF, PsbH, PsbI, PsbJ, PsbK, PsbL, PsbM, PsbT, PsbX, PsbY, PsbZ, Psb30/Ycf12, at least 3 peripheral proteins of the oxygen-evolving complex and a large number of cofactors. It forms dimeric complexes.

Its subcellular location is the plastid. It localises to the chloroplast thylakoid membrane. Its function is as follows. One of the components of the core complex of photosystem II (PSII). PSII is a light-driven water:plastoquinone oxidoreductase that uses light energy to abstract electrons from H(2)O, generating O(2) and a proton gradient subsequently used for ATP formation. It consists of a core antenna complex that captures photons, and an electron transfer chain that converts photonic excitation into a charge separation. This subunit is found at the monomer-monomer interface. The protein is Photosystem II reaction center protein M of Chaetosphaeridium globosum (Charophycean green alga).